The sequence spans 81 residues: Protein I5 homolog (81 aa).

2 helical membrane-spanning segments follow: residues 8–28 (LITI…FSLV) and 53–73 (MEIF…AAYI).

The protein belongs to the Chordopoxvirinae I5 family.

The protein localises to the virion membrane. The polypeptide is Protein I5 homolog (Vertebrata (FPV)).